The primary structure comprises 396 residues: S-adenosylmethionine synthase (396 aa).

His16 contacts ATP. Asp18 contacts Mg(2+). Glu44 serves as a coordination point for K(+). Positions 57 and 100 each coordinate L-methionine. The flexible loop stretch occupies residues 100-110 (QSPDINQGVDR). Residues 165–167 (DAK), Asp240, 246–247 (RK), Ala263, and Lys267 each bind ATP. Asp240 contacts L-methionine. Residue Lys271 coordinates L-methionine.

Belongs to the AdoMet synthase family. In terms of assembly, homotetramer; dimer of dimers. The cofactor is Mg(2+). It depends on K(+) as a cofactor.

It localises to the cytoplasm. It carries out the reaction L-methionine + ATP + H2O = S-adenosyl-L-methionine + phosphate + diphosphate. The protein operates within amino-acid biosynthesis; S-adenosyl-L-methionine biosynthesis; S-adenosyl-L-methionine from L-methionine: step 1/1. Its function is as follows. Catalyzes the formation of S-adenosylmethionine (AdoMet) from methionine and ATP. The overall synthetic reaction is composed of two sequential steps, AdoMet formation and the subsequent tripolyphosphate hydrolysis which occurs prior to release of AdoMet from the enzyme. This Pseudomonas fluorescens (strain ATCC BAA-477 / NRRL B-23932 / Pf-5) protein is S-adenosylmethionine synthase.